The primary structure comprises 582 residues: Aspartate--tRNA ligase (582 aa).

Glu-174 is a binding site for L-aspartate. The aspartate stretch occupies residues 198–201 (QITK). Arg-220 contacts L-aspartate. Residues 220–222 (RDE) and Gln-229 contribute to the ATP site. His-443 contacts L-aspartate. Glu-477 contacts ATP. Arg-484 is an L-aspartate binding site. 529–532 (GLDR) serves as a coordination point for ATP.

It belongs to the class-II aminoacyl-tRNA synthetase family. Type 1 subfamily. As to quaternary structure, homodimer.

The protein localises to the cytoplasm. It catalyses the reaction tRNA(Asp) + L-aspartate + ATP = L-aspartyl-tRNA(Asp) + AMP + diphosphate. Functionally, catalyzes the attachment of L-aspartate to tRNA(Asp) in a two-step reaction: L-aspartate is first activated by ATP to form Asp-AMP and then transferred to the acceptor end of tRNA(Asp). In Streptococcus equi subsp. zooepidemicus (strain MGCS10565), this protein is Aspartate--tRNA ligase.